A 396-amino-acid chain; its full sequence is tRNA-specific 2-thiouridylase MnmA (396 aa).

ATP is bound by residues 11 to 18 (GLSGGVDS) and M37. Residues 97–99 (NPD) are interaction with target base in tRNA. The active-site Nucleophile is C102. C102 and C225 are disulfide-bonded. Residue G126 participates in ATP binding. Positions 175–177 (KDQ) are interaction with tRNA. The active-site Cysteine persulfide intermediate is the C225. The interval 343–344 (RY) is interaction with tRNA.

It belongs to the MnmA/TRMU family.

The protein localises to the cytoplasm. The catalysed reaction is S-sulfanyl-L-cysteinyl-[protein] + uridine(34) in tRNA + AH2 + ATP = 2-thiouridine(34) in tRNA + L-cysteinyl-[protein] + A + AMP + diphosphate + H(+). In terms of biological role, catalyzes the 2-thiolation of uridine at the wobble position (U34) of tRNA, leading to the formation of s(2)U34. This chain is tRNA-specific 2-thiouridylase MnmA, found in Methylibium petroleiphilum (strain ATCC BAA-1232 / LMG 22953 / PM1).